Reading from the N-terminus, the 159-residue chain is Cytochrome c-type biogenesis CcmH-like mitochondrial protein (159 aa).

At 1–82 (MEKTDEERKK…ETVLYAPKFD (82 aa)) the chain is on the mitochondrial intermembrane side. Residues cysteine 27 and cysteine 30 each contribute to the heme site. A helical membrane pass occupies residues 83–105 (LQTAALWLTPVIIAGGTAAGIVY). The Mitochondrial matrix segment spans residues 106-159 (QKHRLRKNVDIMALNLIRGVPLTPKERVTILDVLIPPSPPPQGVVSRLRRWLNR).

It belongs to the CcmH/CycL/Ccl2/NrfF family. In terms of assembly, interacts (via N-terminus) with CYTC-1. Interacts with CCMFN1 and CCMFN2.

The protein resides in the mitochondrion inner membrane. Its function is as follows. Plays a central role in mitochondrial cytochrome c maturation. Probable component of a heme lyase complex involved in the reduction of apocytochrome c. Forms a complex with CCMF proteins (CCMFC, CCMFN1 and CCMFN2) that performs the assembly of heme with c-type apocytochromes in mitochondria. This Arabidopsis thaliana (Mouse-ear cress) protein is Cytochrome c-type biogenesis CcmH-like mitochondrial protein.